Reading from the N-terminus, the 42-residue chain is Potassium channel toxin gamma-KTx 3.4 (42 aa).

4 disulfides stabilise this stretch: Cys5–Cys23, Cys11–Cys34, Cys20–Cys39, and Cys24–Cys41.

It belongs to the ergtoxin family. Gamma-KTx 3 subfamily. In terms of tissue distribution, expressed by the venom gland.

The protein localises to the secreted. Functionally, blocks Kv11/ERG potassium channels. The chain is Potassium channel toxin gamma-KTx 3.4 from Centruroides gracilis (Slenderbrown scorpion).